We begin with the raw amino-acid sequence, 306 residues long: Non-specific ribonucleoside hydrolase RihC (306 aa).

Histidine 235 is an active-site residue.

It belongs to the IUNH family. RihC subfamily.

In terms of biological role, hydrolyzes both purine and pyrimidine ribonucleosides with a broad-substrate specificity. The sequence is that of Non-specific ribonucleoside hydrolase RihC from Salmonella dublin (strain CT_02021853).